A 64-amino-acid polypeptide reads, in one-letter code: UPF0337 protein SAB0772 (64 aa).

A disordered region spans residues M1–A40. Residues K25–A40 show a composition bias toward basic and acidic residues.

This sequence belongs to the UPF0337 (CsbD) family.

The protein is UPF0337 protein SAB0772 of Staphylococcus aureus (strain bovine RF122 / ET3-1).